Consider the following 216-residue polypeptide: Pyrophosphatase PpaX (216 aa).

Aspartate 9 serves as the catalytic Nucleophile.

Belongs to the HAD-like hydrolase superfamily. PpaX family. Requires Mg(2+) as cofactor.

The catalysed reaction is diphosphate + H2O = 2 phosphate + H(+). Its function is as follows. Hydrolyzes pyrophosphate formed during P-Ser-HPr dephosphorylation by HPrK/P. Might play a role in controlling the intracellular pyrophosphate pool. The sequence is that of Pyrophosphatase PpaX from Bacillus cereus (strain B4264).